The following is a 132-amino-acid chain: Ragulator complex protein LAMTOR3 homolog (132 aa).

It belongs to the LAMTOR3 family. As to quaternary structure, part of the Ragulator complex.

Its function is as follows. Regulator of the TOR pathway, a signaling cascade that promotes cell growth in response to growth factors, energy levels, and amino acids. May activate the TOR signaling cascade in response to amino acids. This chain is Ragulator complex protein LAMTOR3 homolog, found in Dictyostelium discoideum (Social amoeba).